The following is a 601-amino-acid chain: Aspartate--tRNA ligase (601 aa).

Glu-183 provides a ligand contact to L-aspartate. The interval 207–210 (QIFK) is aspartate. Arg-229 lines the L-aspartate pocket. ATP contacts are provided by residues 229 to 231 (RDE) and Gln-238. L-aspartate is bound at residue His-457. ATP is bound at residue Glu-497. Arg-504 serves as a coordination point for L-aspartate. 549-552 (GIDR) is a binding site for ATP.

This sequence belongs to the class-II aminoacyl-tRNA synthetase family. Type 1 subfamily. Homodimer.

The protein resides in the cytoplasm. The enzyme catalyses tRNA(Asp) + L-aspartate + ATP = L-aspartyl-tRNA(Asp) + AMP + diphosphate. In terms of biological role, catalyzes the attachment of L-aspartate to tRNA(Asp) in a two-step reaction: L-aspartate is first activated by ATP to form Asp-AMP and then transferred to the acceptor end of tRNA(Asp). The sequence is that of Aspartate--tRNA ligase from Leptospira interrogans serogroup Icterohaemorrhagiae serovar copenhageni (strain Fiocruz L1-130).